Consider the following 183-residue polypeptide: Integrase-like protein y4lS (183 aa).

Positions 2 to 136 constitute a Resolvase/invertase-type recombinase catalytic domain; it reads ARIGYARTFT…EGIAAARKRG (135 aa).

It belongs to the site-specific recombinase resolvase family.

This Sinorhizobium fredii (strain NBRC 101917 / NGR234) protein is Integrase-like protein y4lS.